We begin with the raw amino-acid sequence, 275 residues long: Melanoma-associated antigen B5 (275 aa).

The disordered stretch occupies residues 1 to 33; sequence MTSAGVFNAGSDERANSRDEEYPCSSEVSPSTE. A compositionally biased stretch (basic and acidic residues) spans 11–21; it reads SDERANSRDEE. Residues 23–33 are compositionally biased toward low complexity; the sequence is PCSSEVSPSTE. The MAGE domain occupies 40-239; sequence INIKVGLLEQ…GAFSSQYEEA (200 aa).

As to expression, expressed in testis. Not expressed in other normal tissues, but is expressed in tumors of different histological origins.

The polypeptide is Melanoma-associated antigen B5 (MAGEB5) (Homo sapiens (Human)).